The sequence spans 338 residues: Glyceraldehyde-3-phosphate dehydrogenase (338 aa).

NAD(+) contacts are provided by residues 13–14 (RI), aspartate 35, and arginine 80. Residues 151-153 (SCT), threonine 182, 211-212 (TG), and arginine 234 each bind D-glyceraldehyde 3-phosphate. Cysteine 152 functions as the Nucleophile in the catalytic mechanism. Asparagine 316 is an NAD(+) binding site.

It belongs to the glyceraldehyde-3-phosphate dehydrogenase family. In terms of assembly, homotetramer.

Its subcellular location is the cytoplasm. It carries out the reaction D-glyceraldehyde 3-phosphate + phosphate + NAD(+) = (2R)-3-phospho-glyceroyl phosphate + NADH + H(+). It participates in carbohydrate degradation; glycolysis; pyruvate from D-glyceraldehyde 3-phosphate: step 1/5. This chain is Glyceraldehyde-3-phosphate dehydrogenase (GPD), found in Sclerotinia sclerotiorum (White mold).